The following is a 224-amino-acid chain: 2-C-methyl-D-erythritol 4-phosphate cytidylyltransferase (224 aa).

The protein belongs to the IspD/TarI cytidylyltransferase family. IspD subfamily.

The catalysed reaction is 2-C-methyl-D-erythritol 4-phosphate + CTP + H(+) = 4-CDP-2-C-methyl-D-erythritol + diphosphate. The protein operates within isoprenoid biosynthesis; isopentenyl diphosphate biosynthesis via DXP pathway; isopentenyl diphosphate from 1-deoxy-D-xylulose 5-phosphate: step 2/6. In terms of biological role, catalyzes the formation of 4-diphosphocytidyl-2-C-methyl-D-erythritol from CTP and 2-C-methyl-D-erythritol 4-phosphate (MEP). This chain is 2-C-methyl-D-erythritol 4-phosphate cytidylyltransferase, found in Bordetella petrii (strain ATCC BAA-461 / DSM 12804 / CCUG 43448).